Reading from the N-terminus, the 68-residue chain is U1-hexatoxin-Hv1a (68 aa).

5 cysteine pairs are disulfide-bonded: cysteine 3–cysteine 14, cysteine 8–cysteine 22, cysteine 13–cysteine 48, cysteine 32–cysteine 56, and cysteine 50–cysteine 63.

It belongs to the MIT-like AcTx family. Expressed by the venom gland.

The protein localises to the secreted. The protein is U1-hexatoxin-Hv1a of Hadronyche versuta (Blue mountains funnel-web spider).